Here is a 296-residue protein sequence, read N- to C-terminus: UDP-N-acetylglucosamine transporter TMEM241 (296 aa).

10 helical membrane-spanning segments follow: residues 7–29, 32–52, 67–87, 93–113, 121–141, 146–166, 187–207, 211–231, 250–270, and 271–291; these read LVGLTFCTCYLASYLTNKYVLSV, FTYPTLFQGWQTLIGGLLLHV, SHVLVWLPASVLFVGIIYAGS, LAIPVFLTLHNVAEVIICGYQ, TSPAKICSALLLLAAAGCLPF, FNPDGYFWAIIHLLCVGAYKI, IFSVVLLAFASHPTGDLFSVL, FLYFYRFHGSCCASGFLGFFL, WIFFAKIITAGLSILLFDAIL, and TSATTGCLLLGALGEALLVFS.

Belongs to the nucleotide-sugar transporter family. SLC35A subfamily.

The protein resides in the golgi apparatus. Its subcellular location is the cis-Golgi network membrane. Its function is as follows. Golgi-localized UDP-N-acetylglucosamine (UDP-GlcNAc) transporter that transports UDP-N-acetylglucosamine into Golgi lumen. Contributes to lysosomal targeting of NPC2, a key protein required for lysosomal cholesterol exiting, and that utilizes the mannose-6-phosphate (M6P) modification pathway for its lysosomal targeting. The chain is UDP-N-acetylglucosamine transporter TMEM241 from Homo sapiens (Human).